Here is a 542-residue protein sequence, read N- to C-terminus: CTP synthase (542 aa).

Residues 1–265 (MTRYIFVTGG…DDFVVERFGL (265 aa)) are amidoligase domain. S13 contacts CTP. S13 contacts UTP. Residues 14–19 (SLGKGI) and D71 each bind ATP. Mg(2+) is bound by residues D71 and E139. CTP-binding positions include 146 to 148 (DIE), 186 to 191 (KTKPTQ), and K222. UTP is bound by residues 186-191 (KTKPTQ) and K222. Positions 290–541 (TIAMVGKYME…VKAALAQKNK (252 aa)) constitute a Glutamine amidotransferase type-1 domain. Residue G351 participates in L-glutamine binding. Residue C378 is the Nucleophile; for glutamine hydrolysis of the active site. Residues 379–382 (LGMQ), E402, and R469 contribute to the L-glutamine site. Active-site residues include H514 and E516.

It belongs to the CTP synthase family. In terms of assembly, homotetramer.

The catalysed reaction is UTP + L-glutamine + ATP + H2O = CTP + L-glutamate + ADP + phosphate + 2 H(+). The enzyme catalyses L-glutamine + H2O = L-glutamate + NH4(+). It carries out the reaction UTP + NH4(+) + ATP = CTP + ADP + phosphate + 2 H(+). Its pathway is pyrimidine metabolism; CTP biosynthesis via de novo pathway; CTP from UDP: step 2/2. Allosterically activated by GTP, when glutamine is the substrate; GTP has no effect on the reaction when ammonia is the substrate. The allosteric effector GTP functions by stabilizing the protein conformation that binds the tetrahedral intermediate(s) formed during glutamine hydrolysis. Inhibited by the product CTP, via allosteric rather than competitive inhibition. Its function is as follows. Catalyzes the ATP-dependent amination of UTP to CTP with either L-glutamine or ammonia as the source of nitrogen. Regulates intracellular CTP levels through interactions with the four ribonucleotide triphosphates. This is CTP synthase from Pseudomonas putida (strain GB-1).